The primary structure comprises 144 residues: Large ribosomal subunit protein uL16 (144 aa).

Over residues Met1 to His16 the composition is skewed to basic residues. A disordered region spans residues Met1–Glu20.

It belongs to the universal ribosomal protein uL16 family. In terms of assembly, part of the 50S ribosomal subunit.

In terms of biological role, binds 23S rRNA and is also seen to make contacts with the A and possibly P site tRNAs. The chain is Large ribosomal subunit protein uL16 from Limosilactobacillus reuteri (strain DSM 20016) (Lactobacillus reuteri).